We begin with the raw amino-acid sequence, 179 residues long: Large ribosomal subunit protein uL5 (179 aa).

The protein belongs to the universal ribosomal protein uL5 family. In terms of assembly, part of the 50S ribosomal subunit; part of the 5S rRNA/L5/L18/L25 subcomplex. Contacts the 5S rRNA and the P site tRNA. Forms a bridge to the 30S subunit in the 70S ribosome.

Its function is as follows. This is one of the proteins that bind and probably mediate the attachment of the 5S RNA into the large ribosomal subunit, where it forms part of the central protuberance. In the 70S ribosome it contacts protein S13 of the 30S subunit (bridge B1b), connecting the 2 subunits; this bridge is implicated in subunit movement. Contacts the P site tRNA; the 5S rRNA and some of its associated proteins might help stabilize positioning of ribosome-bound tRNAs. The chain is Large ribosomal subunit protein uL5 from Prochlorococcus marinus (strain SARG / CCMP1375 / SS120).